The sequence spans 647 residues: RalA-binding protein 1 (647 aa).

Disordered regions lie at residues 1-151 (MTEC…EKKC) and 163-186 (WKEKKKKKKPTQEPEVPQTDAPSL). The residue at position 2 (Thr2) is an N-acetylthreonine. The segment covering 24-33 (LTRTPSSEEI) has biased composition (polar residues). Residues Ser29, Ser30, and Ser34 each carry the phosphoserine modification. Thr44 is subject to Phosphothreonine. 2 positions are modified to phosphoserine: Ser48 and Ser62. Basic and acidic residues predominate over residues 52–68 (DILHEPPDIVSDDEKDH). ATP is bound at residue 69–74 (GKKKGK). A compositionally biased stretch (basic residues) spans 69–79 (GKKKGKFKKKE). A phosphoserine mark is found at Ser92 and Ser93. Residues 102–118 (KMKRSKGIHVFKKPSFS) are compositionally biased toward basic residues. The nuclear localization signal stretch occupies residues 102–119 (KMKRSKGIHVFKKPSFSK). Positions 119 to 151 (KKKEKDFKIKEKPKEEKHKEEKHKEEKHKEKKC) are enriched in basic and acidic residues. Residues 154 to 219 (FTAADVVKQW…PAVFRECVDY (66 aa)) are mediates association with membranes and could form transmembrane domains. One can recognise a Rho-GAP domain in the interval 192 to 380 (APFADAVERT…VLLKQVTRPL (189 aa)). Positions 403-499 (RRQEFLLNCL…LTEQEELLAM (97 aa)) are mediates interaction with RALA and RALB. Residue 418–425 (GGIKDFSK) participates in ATP binding. Phosphoserine is present on residues Ser461 and Ser463. The mediates interaction with REPS1 and REPS2 stretch occupies residues 500-647 (EQFLRRQIAS…PSKDRKETPI (148 aa)). 2 disordered regions span residues 525–550 (QSRQHGRSETEEYSSDSESESEDEEE) and 601–647 (EQQL…ETPI). Over residues 535-550 (EEYSSDSESESEDEEE) the composition is skewed to acidic residues. A compositionally biased stretch (basic and acidic residues) spans 628–647 (RAAKEQAKPSPSKDRKETPI). Ser637 is modified (phosphoserine).

Interacts with the GTP-bound form of RALA (via effector domain); during mitosis, recruits RALBP1 to the mitochondrion where it promotes DNM1L phosphorylation and mitochondrial fission. Interacts with DNM1L; mediates its mitotic kinase cyclin B-CDK1-mediated phosphorylation during mitosis to promote mitochondrial fission. Interacts with the mitotic kinase cyclin B-CDK1 during mitosis. Interacts with the GTP-bound form of RALB (via effector domain). Interacts with REPS1; the interaction is direct and does not affect RALA-binding nor GTPase activator activity of RALBP1. Interacts with REPS2; the interaction is direct and does not affect RALA-binding nor GTPase activator activity of RALBP1. Interacts with EPN1, NUMB and TFAP2A during interphase and mitosis. Interacts with AP2M1; as part of the AP2 complex. Interacts with CDC42. Interacts with RAC1. In terms of processing, tyrosine-phosphorylated upon stimulation of cells with EGF. Post-translationally, may undergo proteolytic cleavage to give peptides which reassemble to form a transporter complex. Ubiquitously expressed.

Its subcellular location is the cell membrane. It is found in the cytoplasm. It localises to the cytosol. The protein localises to the cytoskeleton. The protein resides in the spindle pole. Its subcellular location is the nucleus. It is found in the mitochondrion. The catalysed reaction is an S-substituted glutathione(in) + ATP + H2O = an S-substituted glutathione(out) + ADP + phosphate + H(+). It catalyses the reaction ATP + H2O + xenobioticSide 1 = ADP + phosphate + xenobioticSide 2.. It carries out the reaction leukotriene C4(in) + ATP + H2O = leukotriene C4(out) + ADP + phosphate + H(+). Multifunctional protein that functions as a downstream effector of RALA and RALB. As a GTPase-activating protein/GAP can inactivate CDC42 and RAC1 by stimulating their GTPase activity. As part of the Ral signaling pathway, may also regulate ligand-dependent EGF and insulin receptors-mediated endocytosis. During mitosis, may act as a scaffold protein in the phosphorylation of EPSIN/EPN1 by the mitotic kinase cyclin B-CDK1, preventing endocytosis during that phase of the cell cycle. During mitosis, also controls mitochondrial fission as an effector of RALA. Recruited to mitochondrion by RALA, acts as a scaffold to foster the mitotic kinase cyclin B-CDK1-mediated phosphorylation and activation of DNM1L. In terms of biological role, could also function as a primary ATP-dependent active transporter for glutathione conjugates of electrophiles. May also actively catalyze the efflux of a wide range of substrates including xenobiotics like doxorubicin (DOX) contributing to cell multidrug resistance. In Rattus norvegicus (Rat), this protein is RalA-binding protein 1.